Reading from the N-terminus, the 883-residue chain is Histidine--tRNA ligase, cytoplasmic (883 aa).

This sequence belongs to the class-II aminoacyl-tRNA synthetase family.

It localises to the cytoplasm. Its subcellular location is the cytosol. The catalysed reaction is tRNA(His) + L-histidine + ATP = L-histidyl-tRNA(His) + AMP + diphosphate + H(+). This Arabidopsis thaliana (Mouse-ear cress) protein is Histidine--tRNA ligase, cytoplasmic.